The chain runs to 632 residues: ATP-dependent zinc metalloprotease FtsH (632 aa).

Residues Met-1–Lys-9 are Cytoplasmic-facing. The chain crosses the membrane as a helical span at residues Pro-10–Leu-30. The Periplasmic segment spans residues Arg-31–Asn-116. The helical transmembrane segment at Phe-117–Phe-137 threads the bilayer. Residues Met-138 to Ser-632 are Cytoplasmic-facing. Gly-210–Thr-217 lines the ATP pocket. Position 434 (His-434) interacts with Zn(2+). The active site involves Glu-435. Positions 438 and 511 each coordinate Zn(2+).

It in the central section; belongs to the AAA ATPase family. In the C-terminal section; belongs to the peptidase M41 family. In terms of assembly, homohexamer. The cofactor is Zn(2+).

It is found in the cell inner membrane. Its function is as follows. Acts as a processive, ATP-dependent zinc metallopeptidase for both cytoplasmic and membrane proteins. Plays a role in the quality control of integral membrane proteins. This chain is ATP-dependent zinc metalloprotease FtsH, found in Helicobacter pylori (strain J99 / ATCC 700824) (Campylobacter pylori J99).